We begin with the raw amino-acid sequence, 107 residues long: Nucleoid-associated protein NE0434 (107 aa).

The protein belongs to the YbaB/EbfC family. In terms of assembly, homodimer.

The protein localises to the cytoplasm. Its subcellular location is the nucleoid. Functionally, binds to DNA and alters its conformation. May be involved in regulation of gene expression, nucleoid organization and DNA protection. In Nitrosomonas europaea (strain ATCC 19718 / CIP 103999 / KCTC 2705 / NBRC 14298), this protein is Nucleoid-associated protein NE0434.